A 1148-amino-acid polypeptide reads, in one-letter code: Transcription-repair-coupling factor (1148 aa).

Residues 615–776 (DMCQPLAMDR…MSGMRDLSII (162 aa)) form the Helicase ATP-binding domain. Position 628 to 635 (628 to 635 (GDVGFGKT)) interacts with ATP. A DEEH box motif is present at residues 729 to 732 (DEEH). The 154-residue stretch at 798 to 951 (VREAILREIL…GFALATHDLE (154 aa)) folds into the Helicase C-terminal domain.

In the N-terminal section; belongs to the UvrB family. It in the C-terminal section; belongs to the helicase family. RecG subfamily. As to quaternary structure, monomer. Interacts with UvrA and RNAP.

It localises to the cytoplasm. Functionally, couples transcription and DNA repair by recognizing RNA polymerase (RNAP) stalled at DNA lesions. Mediates ATP-dependent release of RNAP and its truncated transcript from the DNA, and recruitment of nucleotide excision repair machinery to the damaged site. Can also dissociate RNAP that is blocked by low concentration of nucleoside triphosphates or by physical obstruction, such as bound proteins. In addition, can rescue arrested complexes by promoting forward translocation. Has ATPase activity, which is required for removal of stalled RNAP, but seems to lack helicase activity. May act through a translocase activity that rewinds upstream DNA, leading either to translocation or to release of RNAP when the enzyme active site cannot continue elongation. The polypeptide is Transcription-repair-coupling factor (Escherichia coli (strain K12)).